The primary structure comprises 350 residues: Sodium/calcium exchanger MaX1 (350 aa).

10 helical membrane passes run 4–24, 39–59, 69–89, 101–121, 125–145, 202–222, 242–264, 276–296, 302–322, and 330–350; these read VNFL…DYFV, FVIG…ASSI, IVIG…VGVA, MLKR…VFAF, LSML…FFLF, GGFA…VIGA, VIGT…VSAA, VIGS…LFYP, MSLF…LIFI, and RWEG…LFYI.

This sequence belongs to the Ca(2+):cation antiporter (CaCA) (TC 2.A.19) family.

The protein resides in the cell membrane. Its activity is regulated as follows. Calcium transport is inhibited by Na(+), K(+), Li(+), Mg(2+) or Mn(2+). Functionally, catalyzes Na(+)/Ca(2+) exchange. The transport is electrogenic with a likely stoichiometry of 3 or more Na(+) for each Ca(2+). Is K(+)-independent. In Methanosarcina acetivorans (strain ATCC 35395 / DSM 2834 / JCM 12185 / C2A), this protein is Sodium/calcium exchanger MaX1 (maX1).